The chain runs to 124 residues: Small ribosomal subunit protein uS12c (124 aa).

It belongs to the universal ribosomal protein uS12 family. Part of the 30S ribosomal subunit.

It is found in the plastid. Functionally, with S4 and S5 plays an important role in translational accuracy. Located at the interface of the 30S and 50S subunits. This is Small ribosomal subunit protein uS12c (rps12) from Helicosporidium sp. subsp. Simulium jonesii (Green alga).